The following is a 267-amino-acid chain: O-methyltransferase (267 aa).

S-adenosyl-L-methionine contacts are provided by Gln100 and His145.

The protein belongs to the methyltransferase superfamily.

It functions in the pathway antifungal biosynthesis. In terms of biological role, O-methyltransferase; part of the gene cluster that mediates the biosynthesis of the tetrahydropyranyl antifungal agent lanomycin that acts as an inhibitor of CYP51 and blocks the ergosterol biosynthesis. The biosynthesis probably begins with the formation of an hexaketide, followed by methionine mediated alkylation of C-2 and C-6, and methylation of the reduced C-3 oxygen, pyran forming reductive ring closure, oxygenation of C-4, beta-keto reduction, enoyl reduction and dehydration of the remaining oxygens, and finally, acylation with glycine to complete the biosynthesis. The polypeptide is O-methyltransferase (Pyrenophora dematioidea (Helminthosporium dematioideum)).